The primary structure comprises 148 residues: Tetratricopeptide repeat protein 32 (148 aa).

TPR repeat units lie at residues 12-45 (SSAALATAQARFSRGEFAEARELYSAFIGQCARH), 55-88 (ATAYNNRGQTKYFSVDFYEAMDDYTSAIEILPSF), and 89-122 (EVPYYNRGLIRYRLGYFDEALEDFKKALDLNPGF).

The chain is Tetratricopeptide repeat protein 32 (Ttc32) from Mus musculus (Mouse).